Reading from the N-terminus, the 256-residue chain is uncharacterized protein (256 aa).

Residues 16 to 83 (VRLQKILSRA…DSLVYLALNK (68 aa)) enclose the S4 RNA-binding domain. Asp-121 serves as the catalytic Nucleophile.

This sequence belongs to the pseudouridine synthase RsuA family.

The enzyme catalyses a uridine in RNA = a pseudouridine in RNA. This is an uncharacterized protein from Mycobacterium leprae (strain TN).